Reading from the N-terminus, the 179-residue chain is Large ribosomal subunit protein uL5 (179 aa).

This sequence belongs to the universal ribosomal protein uL5 family. As to quaternary structure, part of the 50S ribosomal subunit; part of the 5S rRNA/L5/L18/L25 subcomplex. Contacts the 5S rRNA and the P site tRNA. Forms a bridge to the 30S subunit in the 70S ribosome.

This is one of the proteins that bind and probably mediate the attachment of the 5S RNA into the large ribosomal subunit, where it forms part of the central protuberance. In the 70S ribosome it contacts protein S13 of the 30S subunit (bridge B1b), connecting the 2 subunits; this bridge is implicated in subunit movement. Contacts the P site tRNA; the 5S rRNA and some of its associated proteins might help stabilize positioning of ribosome-bound tRNAs. The protein is Large ribosomal subunit protein uL5 of Bacillus pumilus (strain SAFR-032).